The chain runs to 160 residues: SsrA-binding protein (160 aa).

This sequence belongs to the SmpB family.

It is found in the cytoplasm. Required for rescue of stalled ribosomes mediated by trans-translation. Binds to transfer-messenger RNA (tmRNA), required for stable association of tmRNA with ribosomes. tmRNA and SmpB together mimic tRNA shape, replacing the anticodon stem-loop with SmpB. tmRNA is encoded by the ssrA gene; the 2 termini fold to resemble tRNA(Ala) and it encodes a 'tag peptide', a short internal open reading frame. During trans-translation Ala-aminoacylated tmRNA acts like a tRNA, entering the A-site of stalled ribosomes, displacing the stalled mRNA. The ribosome then switches to translate the ORF on the tmRNA; the nascent peptide is terminated with the 'tag peptide' encoded by the tmRNA and targeted for degradation. The ribosome is freed to recommence translation, which seems to be the essential function of trans-translation. The sequence is that of SsrA-binding protein from Pasteurella multocida (strain Pm70).